We begin with the raw amino-acid sequence, 101 residues long: DNA-binding protein Fis (101 aa).

Positions 77 to 96 form a DNA-binding region, H-T-H motif; that stretch reads QTRAANMLGINRGTLRKKLK.

The protein belongs to the transcriptional regulatory Fis family. Homodimer.

Functionally, activates ribosomal RNA transcription. Plays a direct role in upstream activation of rRNA promoters. The polypeptide is DNA-binding protein Fis (Shewanella halifaxensis (strain HAW-EB4)).